Reading from the N-terminus, the 196-residue chain is Guanylate kinase (196 aa).

The segment at 1–24 (MPVESGAGNDQPKRLTVLSGPSGV) is disordered. The Guanylate kinase-like domain maps to 13–191 (KRLTVLSGPS…VCDELLALIA (179 aa)). Residue 20-27 (GPSGVGKS) coordinates ATP.

Belongs to the guanylate kinase family.

It localises to the cytoplasm. The catalysed reaction is GMP + ATP = GDP + ADP. Functionally, essential for recycling GMP and indirectly, cGMP. This Thermobifida fusca (strain YX) protein is Guanylate kinase.